The chain runs to 253 residues: Ubiquinone biosynthesis O-methyltransferase (253 aa).

S-adenosyl-L-methionine is bound by residues arginine 47, glycine 78, aspartate 99, and methionine 141.

This sequence belongs to the methyltransferase superfamily. UbiG/COQ3 family.

The catalysed reaction is a 3-demethylubiquinol + S-adenosyl-L-methionine = a ubiquinol + S-adenosyl-L-homocysteine + H(+). The enzyme catalyses a 3-(all-trans-polyprenyl)benzene-1,2-diol + S-adenosyl-L-methionine = a 2-methoxy-6-(all-trans-polyprenyl)phenol + S-adenosyl-L-homocysteine + H(+). It functions in the pathway cofactor biosynthesis; ubiquinone biosynthesis. Functionally, O-methyltransferase that catalyzes the 2 O-methylation steps in the ubiquinone biosynthetic pathway. This chain is Ubiquinone biosynthesis O-methyltransferase, found in Rhodopseudomonas palustris (strain HaA2).